Consider the following 167-residue polypeptide: S-ribosylhomocysteine lyase (167 aa).

The Fe cation site is built by His-54, His-58, and Cys-128.

This sequence belongs to the LuxS family. Homodimer. The cofactor is Fe cation.

It catalyses the reaction S-(5-deoxy-D-ribos-5-yl)-L-homocysteine = (S)-4,5-dihydroxypentane-2,3-dione + L-homocysteine. In terms of biological role, involved in the synthesis of autoinducer 2 (AI-2) which is secreted by bacteria and is used to communicate both the cell density and the metabolic potential of the environment. The regulation of gene expression in response to changes in cell density is called quorum sensing. Catalyzes the transformation of S-ribosylhomocysteine (RHC) to homocysteine (HC) and 4,5-dihydroxy-2,3-pentadione (DPD). The protein is S-ribosylhomocysteine lyase of Sulfurimonas denitrificans (strain ATCC 33889 / DSM 1251) (Thiomicrospira denitrificans (strain ATCC 33889 / DSM 1251)).